The following is a 536-amino-acid chain: Quinate permease (536 aa).

Topologically, residues 1–26 are cytoplasmic; that stretch reads MTLLALKEDRPTPKAVYNWRVYTCAA. A helical membrane pass occupies residues 27-47; sequence IASFASCMIGYDSAFIGTTLA. Topologically, residues 48 to 74 are extracellular; the sequence is LPSFKKEFDFASYTPGALALLQSNIVS. Residues 75–95 form a helical membrane-spanning segment; the sequence is VYQAGAFFGSLFAFATSYFLG. At 96 to 98 the chain is on the cytoplasmic side; it reads RRK. The helical transmembrane segment at 99–119 threads the bilayer; it reads SLIAFSVVFIIGAAIMLAADG. Topologically, residues 120–131 are extracellular; that stretch reads QGRGIAPIIAGR. The chain crosses the membrane as a helical span at residues 132-152; that stretch reads VLAGIGVGGASNMVPIYISEL. The Cytoplasmic segment spans residues 153 to 160; sequence APPAVRGR. The chain crosses the membrane as a helical span at residues 161–181; that stretch reads LVGIYELGWQIGGLVGFWINY. The Extracellular portion of the chain corresponds to 182–195; the sequence is GVNTTMAPTRSQWL. Residue Asn184 is glycosylated (N-linked (GlcNAc...) asparagine). A helical transmembrane segment spans residues 196 to 216; it reads IPFAVQLIPAGLLFLGSFWIP. The Cytoplasmic portion of the chain corresponds to 217–285; it reads ESPRWLFANG…SLKQRKVQWR (69 aa). Residues 286–306 traverse the membrane as a helical segment; the sequence is FFLGGMLFLWQNGSGINAINY. The Extracellular portion of the chain corresponds to 307 to 327; sequence YSPTVFRSIGITGTNTGFLTT. Residues 328–349 form a helical membrane-spanning segment; that stretch reads GIFGVVKMVLTIVWLLWLVDLV. Over 350–352 the chain is Cytoplasmic; that stretch reads GRR. Residues 353-373 traverse the membrane as a helical segment; that stretch reads RMLFIGATGGSLCMWFIGAYI. At 374–389 the chain is on the extracellular side; the sequence is KIAGPGSTKAEDAKLT. The helical transmembrane segment at 390–410 threads the bilayer; that stretch reads SGGIAAIFFFYLWTAFYTPSW. The Cytoplasmic portion of the chain corresponds to 411 to 435; sequence NGTPWVINSEMFDQNTRSLGQASAA. A helical membrane pass occupies residues 436–456; sequence ANNWFWNFIISRFTPQMFIKM. Residues 457–458 lie on the Extracellular side of the membrane; it reads EY. The helical transmembrane segment at 459–479 threads the bilayer; the sequence is GVYFFFASLMLLSIVFIYFFI. The Cytoplasmic portion of the chain corresponds to 480–536; that stretch reads PETKSIPLEAMDRLFEIKPVHNANKILMAELNFDRNPEREESSLDEKDRVTQTENAV. The span at 516 to 530 shows a compositional bias: basic and acidic residues; it reads PEREESSLDEKDRVT. The disordered stretch occupies residues 516–536; the sequence is PEREESSLDEKDRVTQTENAV.

It belongs to the major facilitator superfamily. Sugar transporter (TC 2.A.1.1) family.

The protein resides in the membrane. The polypeptide is Quinate permease (qa-y) (Neurospora terricola).